Here is a 344-residue protein sequence, read N- to C-terminus: Selenide, water dikinase (344 aa).

The active site involves C16. Residues K19 and 47 to 49 (SRD) each bind ATP. Mg(2+) is bound at residue D50. ATP is bound by residues D67, D90, and 138–140 (GHS). D90 is a Mg(2+) binding site. D226 contacts Mg(2+).

Belongs to the selenophosphate synthase 1 family. Class I subfamily. In terms of assembly, homodimer. It depends on Mg(2+) as a cofactor.

It carries out the reaction hydrogenselenide + ATP + H2O = selenophosphate + AMP + phosphate + 2 H(+). In terms of biological role, synthesizes selenophosphate from selenide and ATP. The chain is Selenide, water dikinase from Pseudomonas putida (strain ATCC 47054 / DSM 6125 / CFBP 8728 / NCIMB 11950 / KT2440).